We begin with the raw amino-acid sequence, 261 residues long: Lysoplasmalogenase (261 aa).

8 consecutive transmembrane segments (helical) span residues 29-49 (GWVV…VIAL), 65-85 (PAFK…HPIG), 90-107 (WLVP…LLAI), 111-133 (TWAF…GALL), 146-166 (VAAV…FWPH), 172-192 (LTIP…TALL), 197-217 (TIWT…IGIG), and 227-247 (AVPI…GFFF).

The protein belongs to the TMEM86 family.

It localises to the cell membrane. The catalysed reaction is a 1-O-(1Z-alkenyl)-sn-glycero-3-phosphocholine + H2O = a 2,3-saturated aldehyde + sn-glycerol 3-phosphocholine. It carries out the reaction a 1-O-(1Z-alkenyl)-sn-glycero-3-phosphoethanolamine + H2O = a 2,3-saturated aldehyde + sn-glycero-3-phosphoethanolamine. Its function is as follows. Specifically hydrolyzes the vinyl ether bond of lysoplasmenylcholine (pLPC) and lysoplasmenylethanolamine (pLPE) to release a fatty aldehyde and glycerophospho-choline or glycerophospho-ethanolamine. The polypeptide is Lysoplasmalogenase (Mycobacterium bovis (strain ATCC BAA-935 / AF2122/97)).